The sequence spans 679 residues: NADPH--cytochrome P450 reductase (679 aa).

At Met-1–Ser-21 the chain is on the lumenal side. A helical transmembrane segment spans residues Val-22–Phe-42. The Cytoplasmic portion of the chain corresponds to Leu-43–Ser-679. Ser-64 carries the phosphoserine modification. The Flavodoxin-like domain maps to Ile-81 to Trp-225. FMN is bound by residues Ser-87–Ala-92, Ala-139–Gly-142, Leu-174–Asn-183, and Asp-209. The 243-residue stretch at Lys-280 to Pro-522 folds into the FAD-binding FR-type domain. Residue Arg-299 participates in NADP(+) binding. FAD-binding positions include Arg-425, Arg-455–Ser-458, Cys-473–Val-475, Tyr-479, and Gly-489–Thr-492. Residues Thr-536, Ser-597–Arg-598, Lys-603–Gln-607, and Asp-640 contribute to the NADP(+) site. Position 678 (Trp-678) interacts with FAD.

This sequence belongs to the NADPH--cytochrome P450 reductase family. It in the N-terminal section; belongs to the flavodoxin family. In the C-terminal section; belongs to the flavoprotein pyridine nucleotide cytochrome reductase family. The cofactor is FAD. FMN serves as cofactor.

Its subcellular location is the endoplasmic reticulum membrane. The catalysed reaction is 2 oxidized [cytochrome P450] + NADPH = 2 reduced [cytochrome P450] + NADP(+) + H(+). Functionally, this enzyme is required for electron transfer from NADP to cytochrome P450 in microsomes. It can also provide electron transfer to heme oxygenase and cytochrome B5. In Oryctolagus cuniculus (Rabbit), this protein is NADPH--cytochrome P450 reductase.